A 618-amino-acid chain; its full sequence is Beta-xylosidase (618 aa).

2 disordered regions span residues 76–100 and 463–509; these read ERDR…QEES and LEPQ…PPIQ.

The protein belongs to the glycosyl hydrolase 52 family.

It is found in the secreted. It carries out the reaction Hydrolysis of (1-&gt;4)-beta-D-xylans, to remove successive D-xylose residues from the non-reducing termini.. It functions in the pathway glycan degradation; xylan degradation. The sequence is that of Beta-xylosidase (xylA) from Geobacillus stearothermophilus (Bacillus stearothermophilus).